The primary structure comprises 508 residues: Photosystem II CP47 reaction center protein (508 aa).

6 consecutive transmembrane segments (helical) span residues 21–36 (AVHLMHTALVSGWAGS), 101–115 (IVLSGLLFLAAIWHW), 140–156 (GIHLFLSGVLCFAFGAF), 203–218 (IAAGILGILAGLFHLS), 237–252 (VLSSSIAAVFFAAFVV), and 457–472 (TFALLFFFGHIWHGAR).

It belongs to the PsbB/PsbC family. PsbB subfamily. In terms of assembly, PSII is composed of 1 copy each of membrane proteins PsbA, PsbB, PsbC, PsbD, PsbE, PsbF, PsbH, PsbI, PsbJ, PsbK, PsbL, PsbM, PsbT, PsbX, PsbY, PsbZ, Psb30/Ycf12, at least 3 peripheral proteins of the oxygen-evolving complex and a large number of cofactors. It forms dimeric complexes. The cofactor is Binds multiple chlorophylls. PSII binds additional chlorophylls, carotenoids and specific lipids..

Its subcellular location is the plastid. It localises to the chloroplast thylakoid membrane. Its function is as follows. One of the components of the core complex of photosystem II (PSII). It binds chlorophyll and helps catalyze the primary light-induced photochemical processes of PSII. PSII is a light-driven water:plastoquinone oxidoreductase, using light energy to abstract electrons from H(2)O, generating O(2) and a proton gradient subsequently used for ATP formation. This chain is Photosystem II CP47 reaction center protein, found in Marchantia polymorpha (Common liverwort).